Reading from the N-terminus, the 111-residue chain is Small ribosomal subunit protein bS16 (111 aa).

This sequence belongs to the bacterial ribosomal protein bS16 family.

This Rickettsia prowazekii (strain Madrid E) protein is Small ribosomal subunit protein bS16.